The following is a 310-amino-acid chain: Transcription factor RAX3 (310 aa).

HTH myb-type domains lie at 9–62 (KANV…LNYL) and 63–117 (RPNI…KKKL). 2 consecutive DNA-binding regions (H-T-H motif) follow at residues 38 to 62 (WIAL…LNYL) and 90 to 113 (WSII…NTRL).

In terms of tissue distribution, ubiquitous.

The protein localises to the nucleus. Transcription activator. Positively regulates axillary meristems (AMs) formation and development, especially during inflorescence. This chain is Transcription factor RAX3 (RAX3), found in Arabidopsis thaliana (Mouse-ear cress).